A 402-amino-acid chain; its full sequence is Envelope glycoprotein D (402 aa).

The first 30 residues, 1-30 (MSTFKLMMDGRLVFAMAIAILSVVLSCGTC), serve as a signal peptide directing secretion. The Virion surface portion of the chain corresponds to 31–355 (EKAKRAVRGR…NSTFVGISVG (325 aa)). 2 N-linked (GlcNAc...) asparagine; by host glycosylation sites follow: asparagine 53 and asparagine 61. Disulfide bonds link cysteine 88/cysteine 209, cysteine 126/cysteine 223, and cysteine 138/cysteine 147. The tract at residues 281 to 315 (PDNHPGFDSVESEITQNKTDPKPGQADPKPNQPFK) is disordered. Residues asparagine 297 and asparagine 346 are each glycosylated (N-linked (GlcNAc...) asparagine; by host). The chain crosses the membrane as a helical span at residues 356–372 (LGIAGLVLVGVILYVCL). Residues 373-402 (RRKKELKKSAQNGLTRLRSTFKDVKYTQLP) lie on the Intravirion side of the membrane.

It belongs to the herpesviridae glycoprotein D family.

Its subcellular location is the virion membrane. Its function is as follows. Envelope glycoprotein that binds to host cell entry receptors, promoting the virus entry into host cells. May trigger fusion with host membrane, by recruiting the fusion machinery composed of gB and gH/gL. The protein is Envelope glycoprotein D (gD) of Equus caballus (Horse).